The following is a 144-amino-acid chain: Large ribosomal subunit protein uL11 (144 aa).

It belongs to the universal ribosomal protein uL11 family. As to quaternary structure, part of the ribosomal stalk of the 50S ribosomal subunit. Interacts with L10 and the large rRNA to form the base of the stalk. L10 forms an elongated spine to which L12 dimers bind in a sequential fashion forming a multimeric L10(L12)X complex. In terms of processing, one or more lysine residues are methylated.

Its function is as follows. Forms part of the ribosomal stalk which helps the ribosome interact with GTP-bound translation factors. This Francisella tularensis subsp. holarctica (strain OSU18) protein is Large ribosomal subunit protein uL11.